We begin with the raw amino-acid sequence, 269 residues long: Formamidopyrimidine-DNA glycosylase (269 aa).

Pro-2 (schiff-base intermediate with DNA) is an active-site residue. Residue Glu-3 is the Proton donor of the active site. Lys-57 acts as the Proton donor; for beta-elimination activity in catalysis. DNA is bound by residues His-90, Arg-109, and Lys-150. The FPG-type zinc-finger motif lies at 235-269 (QVYGRHGEPCYTCGEFIQIAKYGQRSSFFCPSCQN). Catalysis depends on Arg-259, which acts as the Proton donor; for delta-elimination activity.

Belongs to the FPG family. In terms of assembly, monomer. Zn(2+) serves as cofactor.

The enzyme catalyses Hydrolysis of DNA containing ring-opened 7-methylguanine residues, releasing 2,6-diamino-4-hydroxy-5-(N-methyl)formamidopyrimidine.. The catalysed reaction is 2'-deoxyribonucleotide-(2'-deoxyribose 5'-phosphate)-2'-deoxyribonucleotide-DNA = a 3'-end 2'-deoxyribonucleotide-(2,3-dehydro-2,3-deoxyribose 5'-phosphate)-DNA + a 5'-end 5'-phospho-2'-deoxyribonucleoside-DNA + H(+). In terms of biological role, involved in base excision repair of DNA damaged by oxidation or by mutagenic agents. Acts as a DNA glycosylase that recognizes and removes damaged bases. Has a preference for oxidized purines, such as 7,8-dihydro-8-oxoguanine (8-oxoG). Has AP (apurinic/apyrimidinic) lyase activity and introduces nicks in the DNA strand. Cleaves the DNA backbone by beta-delta elimination to generate a single-strand break at the site of the removed base with both 3'- and 5'-phosphates. This is Formamidopyrimidine-DNA glycosylase from Baumannia cicadellinicola subsp. Homalodisca coagulata.